We begin with the raw amino-acid sequence, 595 residues long: UvrABC system protein C (595 aa).

The region spanning 14–91 (SNPGCYLHKD…IQENMPKFNI (78 aa)) is the GIY-YIG domain. Residues 196-231 (DKIVNQLKAKMKDMSDQMEFERAAEYRDLIEAVSTL) enclose the UVR domain.

Belongs to the UvrC family. Interacts with UvrB in an incision complex.

The protein resides in the cytoplasm. Functionally, the UvrABC repair system catalyzes the recognition and processing of DNA lesions. UvrC both incises the 5' and 3' sides of the lesion. The N-terminal half is responsible for the 3' incision and the C-terminal half is responsible for the 5' incision. The sequence is that of UvrABC system protein C from Streptococcus thermophilus (strain CNRZ 1066).